A 319-amino-acid chain; its full sequence is D-alanine--D-alanine ligase (319 aa).

In terms of domain architecture, ATP-grasp spans Lys120–Glu315. An ATP-binding site is contributed by Asp147 to Leu198. Mg(2+)-binding residues include Asp270, Glu282, and Asn284.

Belongs to the D-alanine--D-alanine ligase family. Requires Mg(2+) as cofactor. Mn(2+) serves as cofactor.

It localises to the cytoplasm. It catalyses the reaction 2 D-alanine + ATP = D-alanyl-D-alanine + ADP + phosphate + H(+). Its pathway is cell wall biogenesis; peptidoglycan biosynthesis. Its function is as follows. Cell wall formation. This chain is D-alanine--D-alanine ligase, found in Thermus thermophilus (strain ATCC BAA-163 / DSM 7039 / HB27).